The sequence spans 395 residues: MFAGGADGGNGHLPRPRRARRGGGGGGGMGSPPLGPPPPPCTDYDMAYFKAYSHIGVHEEMLKDHVRTNTYRNAIMHHQDLISGKVVLDVGCGTGVLSIFCAFAGAARVYAVDASDIALQAMEIVRENELSDKVIVLHGRIEDVEIEEKVDVIISEWMGYMLLYESMLGSVIFARDKWLKPGGLILPSHASLYLAPITNSHRYQDSVYFWQDVYGIKMSSMMPLAKQCAFMEPSVETISGENVLTWPSVVAQVDCYTIQAPELETITATFNYTSMLQAPLHGFAFWFDVEFNGPVRQRSKKQANQCLDGNTQDASPSNKKKKADAPIVLSTAPEDAPTHWQQTLLYLFEPIELKKDQNIEGSVTISQSQQHARFLNICLKYFTRDQWYVKESVMK.

The segment covering 1-11 (MFAGGADGGNG) has biased composition (gly residues). The interval 1–37 (MFAGGADGGNGHLPRPRRARRGGGGGGGMGSPPLGPP) is disordered. The region spanning 45 to 390 (DMAYFKAYSH…YFTRDQWYVK (346 aa)) is the SAM-dependent MTase PRMT-type domain. S-adenosyl-L-methionine-binding residues include H58, R67, G91, D113, and E142. Catalysis depends on residues E156 and E165. The tract at residues 300–324 (KKQANQCLDGNTQDASPSNKKKKAD) is disordered. Polar residues predominate over residues 302 to 317 (QANQCLDGNTQDASPS).

This sequence belongs to the class I-like SAM-binding methyltransferase superfamily. Protein arginine N-methyltransferase family. PRMT6 subfamily.

In terms of biological role, arginine methyltransferase that can both catalyze the formation of omega-N monomethylarginine (MMA) and asymmetrical dimethylarginine (aDMA). The polypeptide is Probable protein arginine N-methyltransferase 6.2 (PRMT6.2) (Oryza sativa subsp. indica (Rice)).